We begin with the raw amino-acid sequence, 273 residues long: 2,3,4,5-tetrahydropyridine-2,6-dicarboxylate N-succinyltransferase (273 aa).

2 residues coordinate substrate: Arg-105 and Asp-142.

The protein belongs to the transferase hexapeptide repeat family. Homotrimer.

It is found in the cytoplasm. It carries out the reaction (S)-2,3,4,5-tetrahydrodipicolinate + succinyl-CoA + H2O = (S)-2-succinylamino-6-oxoheptanedioate + CoA. Its pathway is amino-acid biosynthesis; L-lysine biosynthesis via DAP pathway; LL-2,6-diaminopimelate from (S)-tetrahydrodipicolinate (succinylase route): step 1/3. The chain is 2,3,4,5-tetrahydropyridine-2,6-dicarboxylate N-succinyltransferase from Bordetella avium (strain 197N).